The primary structure comprises 152 residues: Large ribosomal subunit protein bL9 (152 aa).

The protein belongs to the bacterial ribosomal protein bL9 family.

In terms of biological role, binds to the 23S rRNA. In Nostoc sp. (strain PCC 7120 / SAG 25.82 / UTEX 2576), this protein is Large ribosomal subunit protein bL9.